We begin with the raw amino-acid sequence, 60 residues long: Large ribosomal subunit protein bL33 (60 aa).

The protein belongs to the bacterial ribosomal protein bL33 family.

This chain is Large ribosomal subunit protein bL33, found in Cytophaga hutchinsonii (strain ATCC 33406 / DSM 1761 / CIP 103989 / NBRC 15051 / NCIMB 9469 / D465).